The sequence spans 318 residues: Glycine--tRNA ligase alpha subunit (318 aa).

This sequence belongs to the class-II aminoacyl-tRNA synthetase family. In terms of assembly, tetramer of two alpha and two beta subunits.

The protein resides in the cytoplasm. The enzyme catalyses tRNA(Gly) + glycine + ATP = glycyl-tRNA(Gly) + AMP + diphosphate. The chain is Glycine--tRNA ligase alpha subunit from Saccharophagus degradans (strain 2-40 / ATCC 43961 / DSM 17024).